A 157-amino-acid polypeptide reads, in one-letter code: 2-C-methyl-D-erythritol 2,4-cyclodiphosphate synthase (157 aa).

Residues D8 and H10 each contribute to the a divalent metal cation site. 4-CDP-2-C-methyl-D-erythritol 2-phosphate is bound by residues 8 to 10 and 34 to 35; these read DVH and HS. H42 is a binding site for a divalent metal cation. Residues 56–58, 61–65, 100–106, 132–135, F139, and R142 each bind 4-CDP-2-C-methyl-D-erythritol 2-phosphate; these read DIG, FPDTD, AQAPKMA, and TTTE.

The protein belongs to the IspF family. In terms of assembly, homotrimer. Requires a divalent metal cation as cofactor.

It catalyses the reaction 4-CDP-2-C-methyl-D-erythritol 2-phosphate = 2-C-methyl-D-erythritol 2,4-cyclic diphosphate + CMP. The protein operates within isoprenoid biosynthesis; isopentenyl diphosphate biosynthesis via DXP pathway; isopentenyl diphosphate from 1-deoxy-D-xylulose 5-phosphate: step 4/6. Involved in the biosynthesis of isopentenyl diphosphate (IPP) and dimethylallyl diphosphate (DMAPP), two major building blocks of isoprenoid compounds. Catalyzes the conversion of 4-diphosphocytidyl-2-C-methyl-D-erythritol 2-phosphate (CDP-ME2P) to 2-C-methyl-D-erythritol 2,4-cyclodiphosphate (ME-CPP) with a corresponding release of cytidine 5-monophosphate (CMP). The protein is 2-C-methyl-D-erythritol 2,4-cyclodiphosphate synthase of Pseudomonas syringae pv. syringae (strain B728a).